The chain runs to 145 residues: Leptin (145 aa).

Residues 1-12 (LWLWPYLFFIEA) form the signal peptide.

Belongs to the leptin family.

The protein resides in the secreted. Functionally, key player in the regulation of energy balance and body weight control. Once released into the circulation, has central and peripheral effects by binding LEPR, found in many tissues, which results in the activation of several major signaling pathways. In the hypothalamus, acts as an appetite-regulating factor that induces a decrease in food intake and an increase in energy consumption by inducing anorexinogenic factors and suppressing orexigenic neuropeptides, also regulates bone mass and secretion of hypothalamo-pituitary-adrenal hormones. In the periphery, increases basal metabolism, influences reproductive function, regulates pancreatic beta-cell function and insulin secretion, is pro-angiogenic for endothelial cell and affects innate and adaptive immunity. In the arcuate nucleus of the hypothalamus, activates by depolarization POMC neurons inducing FOS and SOCS3 expression to release anorexigenic peptides and inhibits by hyperpolarization NPY neurons inducing SOCS3 with a consequent reduction on release of orexigenic peptides. In addition to its known satiety inducing effect, has a modulatory role in nutrient absorption. In the intestine, reduces glucose absorption by enterocytes by activating PKC and leading to a sequential activation of p38, PI3K and ERK signaling pathways which exerts an inhibitory effect on glucose absorption. Acts as a growth factor on certain tissues, through the activation of different signaling pathways increases expression of genes involved in cell cycle regulation such as CCND1, via JAK2-STAT3 pathway, or VEGFA, via MAPK1/3 and PI3K-AKT1 pathways. May also play an apoptotic role via JAK2-STAT3 pathway and up-regulation of BIRC5 expression. Pro-angiogenic, has mitogenic activity on vascular endothelial cells and plays a role in matrix remodeling by regulating the expression of matrix metalloproteinases (MMPs) and tissue inhibitors of metalloproteinases (TIMPs). In innate immunity, modulates the activity and function of neutrophils by increasing chemotaxis and the secretion of oxygen radicals. Increases phagocytosis by macrophages and enhances secretion of pro-inflammatory mediators. Increases cytotoxic ability of NK cells. Plays a pro-inflammatory role, in synergy with IL1B, by inducing NOS2 which promotes the production of IL6, IL8 and Prostaglandin E2, through a signaling pathway that involves JAK2, PI3K, MAP2K1/MEK1 and MAPK14/p38. In adaptive immunity, promotes the switch of memory T-cells towards T helper-1 cell immune responses. Increases CD4(+)CD25(-) T-cell proliferation and reduces autophagy during TCR (T-cell receptor) stimulation, through MTOR signaling pathway activation and BCL2 up-regulation. The polypeptide is Leptin (LEP) (Equus caballus (Horse)).